Consider the following 813-residue polypeptide: LPS-assembly protein LptD (813 aa).

A signal peptide spans 1–22 (MRRALRLLPLPLSIAICLPAMA).

This sequence belongs to the LptD family. In terms of assembly, component of the lipopolysaccharide transport and assembly complex. Interacts with LptE and LptA.

The protein localises to the cell outer membrane. Together with LptE, is involved in the assembly of lipopolysaccharide (LPS) at the surface of the outer membrane. The protein is LPS-assembly protein LptD of Xanthomonas axonopodis pv. citri (strain 306).